The sequence spans 238 residues: Tetraspanin-4 (238 aa).

Residues 1–13 (MARACLQAVKYLM) are Cytoplasmic-facing. A helical transmembrane segment spans residues 14–34 (FAFNLLFWLGGCGVLGVGIWL). The Extracellular portion of the chain corresponds to 35–55 (AATQGSFATLSSSFPSLSAAN). The chain crosses the membrane as a helical span at residues 56 to 76 (LLIITGAFVMAIGFVGCLGAI). Topologically, residues 77-85 (KENKCLLLT) are cytoplasmic. Residues 86–106 (FFLLLLLVFLLEATIAILFFA) form a helical membrane-spanning segment. Topologically, residues 107–201 (YTDKIDRYAQ…ETVKVWLQEN (95 aa)) are extracellular. N-linked (GlcNAc...) asparagine glycans are attached at residues Asn152 and Asn161. A helical transmembrane segment spans residues 202–222 (LLAVGIFGLCTALVQILGLTF). Topologically, residues 223 to 238 (AMTMYCQVVKADTYCA) are cytoplasmic.

Belongs to the tetraspanin (TM4SF) family. As to quaternary structure, forms a complex with integrins.

Its subcellular location is the membrane. The protein is Tetraspanin-4 (TSPAN4) of Pongo abelii (Sumatran orangutan).